We begin with the raw amino-acid sequence, 499 residues long: MKTCLIFFLYTTILQYYFHFSVSSLSTPLLLHLSHSLSTSKHSSSPLHLLKSSSSRSSARFRRHHHKQQQQQLSLPISSGSDYLISLSVGSSSSAVSLYLDTGSDLVWFPCRPFTCILCESKPLPPSPPSSLSSSATTVSCSSPSCSAAHSSLPSSDLCAISNCPLDFIETGDCNTSSYPCPPFYYAYGDGSLVAKLYSDSLSLPSVSVSNFTFGCAHTTLAEPIGVAGFGRGRLSLPAQLAVHSPHLGNSFSYCLVSHSFDSDRVRRPSPLILGRFVDKKEKRVGTTDDHDDGDDEKKKKNEFVFTEMLENPKHPYFYSVSLQGISIGKRNIPAPAMLRRIDKNGGGGVVVDSGTTFTMLPAKFYNSVVEEFDSRVGRVHERADRVEPSSGMSPCYYLNQTVKVPALVLHFAGNRSSVTLPRRNYFYEFMDGGDGKEEKRKIGCLMLMNGGDESELRGGTGAILGNYQQQGFEVVYDLLNRRVGFAKRKCASLWDSLK.

The N-terminal stretch at 1-26 is a signal peptide; it reads MKTCLIFFLYTTILQYYFHFSVSSLS. The 405-residue stretch at 83-487 folds into the Peptidase A1 domain; sequence YLISLSVGSS…DLLNRRVGFA (405 aa). Asp-101 is a catalytic residue. A disulfide bond links Cys-111 and Cys-119. N-linked (GlcNAc...) asparagine glycans are attached at residues Asn-175 and Asn-211. Residue Asp-353 is part of the active site. Cys-396 and Cys-445 are joined by a disulfide. Asn-400 and Asn-415 each carry an N-linked (GlcNAc...) asparagine glycan.

The protein belongs to the peptidase A1 family.

The polypeptide is Probable aspartyl protease At4g16563 (Arabidopsis thaliana (Mouse-ear cress)).